The chain runs to 72 residues: Small ribosomal subunit protein bS18 (72 aa).

Belongs to the bacterial ribosomal protein bS18 family. Part of the 30S ribosomal subunit. Forms a tight heterodimer with protein bS6.

Its function is as follows. Binds as a heterodimer with protein bS6 to the central domain of the 16S rRNA, where it helps stabilize the platform of the 30S subunit. The protein is Small ribosomal subunit protein bS18 of Francisella tularensis subsp. holarctica (strain OSU18).